Here is a 258-residue protein sequence, read N- to C-terminus: Chymotrypsin-like elastase family member 1 (258 aa).

The N-terminal stretch at 1–8 is a signal peptide; it reads MLVLYGHS. Residues 9–18 constitute a propeptide, activation peptide; that stretch reads TQDVPETNAR. A Peptidase S1 domain is found at 19–256; sequence VVGGTEARRN…YITWINNVIA (238 aa). The cysteines at positions 48 and 64 are disulfide-linked. The active-site Charge relay system is H63. The Ca(2+) site is built by E77, N79, Q82, and E87. N79 is a glycosylation site (N-linked (GlcNAc...) asparagine). The active-site Charge relay system is the D111. Cystine bridges form between C145/C212, C176/C192, and C202/C232. Residue S206 is the Charge relay system of the active site. A glycan (N-linked (GlcNAc...) asparagine) is linked at N233.

It belongs to the peptidase S1 family. Elastase subfamily. Ca(2+) serves as cofactor.

It localises to the secreted. It catalyses the reaction Hydrolysis of proteins, including elastin. Preferential cleavage: Ala-|-Xaa.. Serine proteases that hydrolyze many proteins in addition to elastin. The protein is Chymotrypsin-like elastase family member 1 (CELA1) of Canis lupus familiaris (Dog).